Consider the following 250-residue polypeptide: Deoxynucleoside-5'-monophosphate kinase (250 aa).

Gly-14, Asp-16, and Thr-17 together coordinate ATP. DGMP is bound by residues Val-44, Lys-65, Arg-130, Gly-137, Thr-138, Trp-150, Asp-170, Arg-172, Glu-176, and Ser-210.

It belongs to the dNMP kinase family. In terms of assembly, monomer.

The enzyme catalyses a 2'-deoxyribonucleoside 5'-phosphate + ATP = a 2'-deoxyribonucleoside 5'-diphosphate + ADP. Allows the synthesis of deoxyribonucleoside triphosphates necessary for the rapid viral DNA replication. Phosphorylates all four dNMPs. The enzyme had the highest activity with dAMP and had about 30% less activity with dTMP and dGMP, respectively. The lowest activity was observed with dCMP as the substrate (about 35% of that with dAMP). The chain is Deoxynucleoside-5'-monophosphate kinase from Escherichia coli (Enterobacteria phage T5).